The following is a 432-amino-acid chain: Adenylosuccinate synthetase (432 aa).

GTP-binding positions include 12-18 and 40-42; these read GDEGKGK and GHT. D13 acts as the Proton acceptor in catalysis. Mg(2+)-binding residues include D13 and G40. Residues 13–16, 38–41, T132, R146, Q226, T241, and R305 contribute to the IMP site; these read DEGK and NAGH. H41 functions as the Proton donor in the catalytic mechanism. 301 to 307 is a binding site for substrate; the sequence is VVTGRKR. GTP contacts are provided by residues R307, 333–335, and 415–417; these read KLD and STS.

This sequence belongs to the adenylosuccinate synthetase family. In terms of assembly, homodimer. The cofactor is Mg(2+).

The protein localises to the cytoplasm. It carries out the reaction IMP + L-aspartate + GTP = N(6)-(1,2-dicarboxyethyl)-AMP + GDP + phosphate + 2 H(+). Its pathway is purine metabolism; AMP biosynthesis via de novo pathway; AMP from IMP: step 1/2. Plays an important role in the de novo pathway of purine nucleotide biosynthesis. Catalyzes the first committed step in the biosynthesis of AMP from IMP. This is Adenylosuccinate synthetase from Rhizobium etli (strain CIAT 652).